We begin with the raw amino-acid sequence, 264 residues long: Putative HTH-type transcriptional regulator TrmBL2 (264 aa).

Positions 33 to 54 (LTPAELASVSEVPAPRTYDVLR) form a DNA-binding region, H-T-H motif.

The protein belongs to the transcriptional regulator TrmB family.

Functionally, binds to the maltodextrin transport gene cluster (mdxE operon) promoter and to some other TGM (Thermococcales-Glycolytic-Motif) sequences, but not exclusively. This Pyrococcus furiosus (strain ATCC 43587 / DSM 3638 / JCM 8422 / Vc1) protein is Putative HTH-type transcriptional regulator TrmBL2 (trmBL2).